A 346-amino-acid chain; its full sequence is L-glyceraldehyde 3-phosphate reductase (346 aa).

NADP(+)-binding residues include Trp-33, Asp-61, Tyr-66, Ser-168, Gln-193, Thr-223, Leu-225, Gln-227, Lys-233, Ser-303, Gln-307, and Asn-311.

This sequence belongs to the shaker potassium channel beta subunit family.

The enzyme catalyses a primary alcohol + NADP(+) = an aldehyde + NADPH + H(+). Its function is as follows. Aldo-keto reductase that catalyzes the stereospecific, NADPH-dependent reduction of L-glyceraldehyde 3-phosphate (L-GAP) to L-glycerol 3-phosphate (L-G3P). The protein is L-glyceraldehyde 3-phosphate reductase of Escherichia coli O157:H7.